Reading from the N-terminus, the 116-residue chain is Ribosome-binding factor A (116 aa).

This sequence belongs to the RbfA family. As to quaternary structure, monomer. Binds 30S ribosomal subunits, but not 50S ribosomal subunits or 70S ribosomes.

The protein localises to the cytoplasm. In terms of biological role, one of several proteins that assist in the late maturation steps of the functional core of the 30S ribosomal subunit. Associates with free 30S ribosomal subunits (but not with 30S subunits that are part of 70S ribosomes or polysomes). Required for efficient processing of 16S rRNA. May interact with the 5'-terminal helix region of 16S rRNA. The chain is Ribosome-binding factor A from Streptococcus sanguinis (strain SK36).